A 285-amino-acid chain; its full sequence is Sulfoquinovosyl glycerol transport system permease protein SmoH (285 aa).

Transmembrane regions (helical) follow at residues 21-41 (FIAA…ILFT), 83-103 (FMVA…AAYA), 115-135 (ILSL…VPLF), 150-170 (LILP…VSFF), 195-215 (VVVP…FVNA), and 250-270 (PVIS…IVIF). The ABC transmembrane type-1 domain maps to 79–270 (LFNSFMVALL…VPVAILIVIF (192 aa)).

It belongs to the binding-protein-dependent transport system permease family. In terms of assembly, the complex is probably composed of two ATP-binding proteins (SmoE), two transmembrane proteins (SmoG and SmoH) and a solute-binding protein (SmoF).

Its subcellular location is the cell inner membrane. Its function is as follows. Part of the ABC transporter complex SmoEFGH involved in sulfoquinovosyl glycerol (SQGro) uptake. Responsible for the translocation of the substrate across the membrane. The sequence is that of Sulfoquinovosyl glycerol transport system permease protein SmoH from Agrobacterium fabrum (strain C58 / ATCC 33970) (Agrobacterium tumefaciens (strain C58)).